The chain runs to 489 residues: Protein nucleotidyltransferase YdiU (489 aa).

ATP contacts are provided by Gly-88, Gly-90, Arg-91, Lys-111, Asp-123, Gly-124, Arg-174, and Arg-181. Asp-250 serves as the catalytic Proton acceptor. Mg(2+) is bound by residues Asn-251 and Asp-260. Position 260 (Asp-260) interacts with ATP.

Belongs to the SELO family. Mg(2+) serves as cofactor. It depends on Mn(2+) as a cofactor.

It carries out the reaction L-seryl-[protein] + ATP = 3-O-(5'-adenylyl)-L-seryl-[protein] + diphosphate. The catalysed reaction is L-threonyl-[protein] + ATP = 3-O-(5'-adenylyl)-L-threonyl-[protein] + diphosphate. The enzyme catalyses L-tyrosyl-[protein] + ATP = O-(5'-adenylyl)-L-tyrosyl-[protein] + diphosphate. It catalyses the reaction L-histidyl-[protein] + UTP = N(tele)-(5'-uridylyl)-L-histidyl-[protein] + diphosphate. It carries out the reaction L-seryl-[protein] + UTP = O-(5'-uridylyl)-L-seryl-[protein] + diphosphate. The catalysed reaction is L-tyrosyl-[protein] + UTP = O-(5'-uridylyl)-L-tyrosyl-[protein] + diphosphate. Functionally, nucleotidyltransferase involved in the post-translational modification of proteins. It can catalyze the addition of adenosine monophosphate (AMP) or uridine monophosphate (UMP) to a protein, resulting in modifications known as AMPylation and UMPylation. This chain is Protein nucleotidyltransferase YdiU, found in Vibrio parahaemolyticus serotype O3:K6 (strain RIMD 2210633).